We begin with the raw amino-acid sequence, 258 residues long: Probable S-methyl-5'-thioinosine phosphorylase (258 aa).

Phosphate is bound at residue 53–54 (RH). Met180 lines the substrate pocket. Thr181 serves as a coordination point for phosphate. 204–206 (NQA) contributes to the substrate binding site.

It belongs to the PNP/MTAP phosphorylase family. MTAP subfamily. In terms of assembly, homotrimer.

It catalyses the reaction S-methyl-5'-thioinosine + phosphate = 5-(methylsulfanyl)-alpha-D-ribose 1-phosphate + hypoxanthine. It functions in the pathway purine metabolism; purine nucleoside salvage. In terms of biological role, catalyzes the reversible phosphorylation of S-methyl-5'-thioinosine (MTI) to hypoxanthine and 5-methylthioribose-1-phosphate. Involved in the breakdown of S-methyl-5'-thioadenosine (MTA), a major by-product of polyamine biosynthesis. Catabolism of (MTA) occurs via deamination to MTI and phosphorolysis to hypoxanthine. In Methanosarcina acetivorans (strain ATCC 35395 / DSM 2834 / JCM 12185 / C2A), this protein is Probable S-methyl-5'-thioinosine phosphorylase.